We begin with the raw amino-acid sequence, 453 residues long: UDP-glucosyltransferase avaP (453 aa).

It belongs to the UDP-glycosyltransferase family.

It participates in secondary metabolite biosynthesis. In terms of biological role, UDP-glucosyltransferase; part of the cluster that mediates the biosynthesis of a highly modified cyclo-arginine-tryptophan dipeptide (cRW). The first step of the pathway is perfornmed by the arginine-containing cyclodipeptide synthase (RCPDS) avaA that acts as the scaffold-generating enzyme and is responsible for formation of the cyclo-Arg-Trp (cRW) diketopiperazine. AvaB then acts as a multifunctional flavoenzyme that is responsible for generating the cyclo-Arg-formylkynurenine DKP, which can be deformylated by avaC. AvaB then further catalyzes an additional N-oxidation followed by cyclization and dehydration. The next step is an N-acetylation of the guanidine group catalyzed by the arginine N-acetyltransferase avaD. The roles of the additional enzymes identified within the ava cluster still have to be determined. The chain is UDP-glucosyltransferase avaP from Aspergillus versicolor.